The primary structure comprises 117 residues: Photosystem II reaction center Psb28 protein (117 aa).

The protein belongs to the Psb28 family. Part of the photosystem II complex.

The protein resides in the cellular thylakoid membrane. This Prochlorococcus marinus (strain MIT 9211) protein is Photosystem II reaction center Psb28 protein.